Here is a 2063-residue protein sequence, read N- to C-terminus: Rho guanine nucleotide exchange factor 17 (2063 aa).

Disordered stretches follow at residues 22–365 (WSGG…MSDS), 380–466 (YLAS…SNPD), 485–581 (LRVR…AEED), and 602–958 (IQRM…RHVR). A compositionally biased stretch (low complexity) spans 65 to 76 (PLAAPAQPRPLR). The segment covering 87–96 (RRFDAPRLDD) has biased composition (basic and acidic residues). Low complexity predominate over residues 108–122 (PAAAEEAAEGPARGA). 2 positions are modified to phosphoserine: S142 and S152. The segment covering 225–250 (AGARASCSSSSIAASYPVSRSRAASS) has biased composition (low complexity). S310 is modified (phosphoserine). Residues 313–323 (LNLSSMNSAGV) show a composition bias toward polar residues. A phosphoserine mark is found at S326, S332, S383, S387, S395, S410, and S420. Over residues 388 to 397 (RGSSRYSSTE) the composition is skewed to polar residues. The span at 445–456 (ALRDGGFEPEKS) shows a compositional bias: basic and acidic residues. Phosphoserine occurs at positions 461 and 546. Residues 562–573 (SALKSSSSELLL) are compositionally biased toward low complexity. S619 is modified (phosphoserine). Residues 671 to 680 (LSSSSAQTNH) are compositionally biased toward polar residues. Phosphoserine is present on S696. Phosphothreonine is present on residues T699 and T702. S735 is subject to Phosphoserine. The span at 754 to 765 (SVDSNLLGSLSP) shows a compositional bias: polar residues. The segment covering 827–836 (SLSDPSRRGE) has biased composition (basic and acidic residues). At S914 the chain carries Phosphoserine. Over residues 917–928 (LIRRGSKKRPAR) the composition is skewed to basic residues. Residues 930 to 939 (SHQELRRDEG) show a composition bias toward basic and acidic residues. Phosphoserine is present on residues S961 and S1002. The segment at 1034–1060 (APPSAEAKPPEAARPADEPTPASKCCS) is disordered. The segment covering 1041–1050 (KPPEAARPAD) has biased composition (basic and acidic residues). Residues 1066-1254 (MRKHVAMTLL…KQVAERINKG (189 aa)) form the DH domain. Residue S1331 is modified to Phosphoserine. Disordered regions lie at residues 1564-1584 (HREP…PAGP), 1616-1719 (GLEM…SSHG), 1991-2020 (TPPP…PAPA), and 2036-2055 (FRLS…DDST). Positions 1568-1582 (PPSLRSPPETAPEPA) are enriched in pro residues. Residues 1644–1680 (SPSPSGTLQSQASRSTISSSFGNEETPSSKEATAETT) show a composition bias toward low complexity. Basic and acidic residues predominate over residues 2004 to 2013 (PSLEHRDSPW).

In terms of tissue distribution, highly expressed in the heart.

Its function is as follows. Acts as a guanine nucleotide exchange factor (GEF) for RhoA GTPases. In Homo sapiens (Human), this protein is Rho guanine nucleotide exchange factor 17 (ARHGEF17).